We begin with the raw amino-acid sequence, 348 residues long: Putative transport protein HP_0567 (348 aa).

A run of 8 helical transmembrane segments spans residues 6 to 26, 27 to 47, 56 to 76, 143 to 163, 194 to 214, 224 to 244, 266 to 286, and 300 to 320; these read FFWILFLIGFYWMIYLYQDFL, MDALIAGLLCVGFFQVKVFLD, SFLCVLILASVLIVPLYFIVY, LKLITDALFILGLLFFFFYYG, IVLLTSLITVILEGVAFGVMI, LGILYGLASLVPAVGGALIWI, SILLISVLIDSVIKPILIVFI, and MLIFFSMIAGISQFGFWGIIV.

Belongs to the autoinducer-2 exporter (AI-2E) (TC 2.A.86) family.

Its subcellular location is the cell membrane. This Helicobacter pylori (strain ATCC 700392 / 26695) (Campylobacter pylori) protein is Putative transport protein HP_0567.